A 223-amino-acid chain; its full sequence is Mating-type protein ALPHA2 (223 aa).

A DNA-binding region (homeobox; TALE-type) is located at residues 151–213; sequence EFKKGKRFLK…NRRRKDKITE (63 aa).

Belongs to the TALE/M-ATYP homeobox family. Forms a heterodimer with A1.

Its subcellular location is the nucleus. Functionally, mating type proteins are sequence specific DNA-binding proteins that act as master switches in yeast differentiation by controlling gene expression in a cell type-specific fashion. Transcriptional corepressor that acts in conjunction with A1 to repress transcription of haploid-specific genes. The sequence is that of Mating-type protein ALPHA2 (HMLALPHA2) from Kluyveromyces lactis (strain ATCC 8585 / CBS 2359 / DSM 70799 / NBRC 1267 / NRRL Y-1140 / WM37) (Yeast).